Reading from the N-terminus, the 173-residue chain is Peptide deformylase (173 aa).

Cys-98 and His-140 together coordinate Fe cation. The active site involves Glu-141. A Fe cation-binding site is contributed by His-144.

This sequence belongs to the polypeptide deformylase family. Fe(2+) serves as cofactor.

It catalyses the reaction N-terminal N-formyl-L-methionyl-[peptide] + H2O = N-terminal L-methionyl-[peptide] + formate. Functionally, removes the formyl group from the N-terminal Met of newly synthesized proteins. Requires at least a dipeptide for an efficient rate of reaction. N-terminal L-methionine is a prerequisite for activity but the enzyme has broad specificity at other positions. In Caulobacter vibrioides (strain ATCC 19089 / CIP 103742 / CB 15) (Caulobacter crescentus), this protein is Peptide deformylase.